We begin with the raw amino-acid sequence, 1131 residues long: Activity-dependent neuroprotector homeobox protein 2 (1131 aa).

The segment at 73-96 adopts a C2H2-type 1 zinc-finger fold; it reads YCCGLCKYSTKVLTSFKNHLHRYH. A C2H2-type 2; degenerate zinc finger spans residues 106-128; sequence IPCPNCVFASQPKVVGRHFRMFH. Glycyl lysine isopeptide (Lys-Gly) (interchain with G-Cter in SUMO2) cross-links involve residues Lys118 and Lys146. The segment at 155 to 178 adopts a C2H2-type 3; degenerate zinc-finger fold; that stretch reads FTCLKCNFSNTLYYSMKKHVLVAH. The segment at 215–240 adopts a C2H2-type 4 zinc-finger fold; it reads YYCKKCNANASSQDALMYHILTSDIH. The span at 274-285 shows a compositional bias: low complexity; that stretch reads LAAPANGSAPSA. The segment at 274-329 is disordered; that stretch reads LAAPANGSAPSAPAQPPCFHLALPQNSPSPAAGQPVTVAQGAPGSLTHSPPAAGQS. The C2H2-type 5; degenerate zinc finger occupies 694-716; the sequence is KTCPVCNELFPSNVYQVHMEVAH. Residues 747–768 form a C2H2-type 6; degenerate zinc finger; that stretch reads VRCLSCKCLVSEEELIHHLLMH. C2H2-type zinc fingers lie at residues 770–793 and 875–898; these read LGCL…RNRH and STCP…KERH. A C2H2-type 9; degenerate zinc finger spans residues 913-937; the sequence is FKCIHCCGVYTGNMTLAAIAVHLVR. Residues Lys979 and Lys1018 each participate in a glycyl lysine isopeptide (Lys-Gly) (interchain with G-Cter in SUMO2) cross-link. Phosphoserine is present on Ser1024. A Glycyl lysine isopeptide (Lys-Gly) (interchain with G-Cter in SUMO1); alternate cross-link involves residue Lys1032. Lys1032 is covalently cross-linked (Glycyl lysine isopeptide (Lys-Gly) (interchain with G-Cter in SUMO2); alternate). Positions 1043–1102 form a DNA-binding region, homeobox; sequence PKKYEGRSYEEKKQFLKDYFHKKPYPSKKEIELLSSLFWVWKIDVASFFGKRRYICMKAI.

The protein belongs to the krueppel C2H2-type zinc-finger protein family. As to quaternary structure, may interact with SMARCA4/BRG1.

The protein resides in the nucleus. In terms of biological role, may be involved in transcriptional regulation. May play a role in neuronal function; perhaps involved in protection of brain tissues from oxidative stress. May be involved in erythroid differentiation. The polypeptide is Activity-dependent neuroprotector homeobox protein 2 (ADNP2) (Homo sapiens (Human)).